The following is a 557-amino-acid chain: Membrane protein insertase YidC (557 aa).

The helical transmembrane segment at 1-21 (MNWLRNSLIAAILVITYVLFI) threads the bilayer. Residues 52 to 71 (SDDAVASSATEESDVPEVSV) are disordered. 5 helical membrane passes run 346 to 366 (TIDYSFLWFIAKPLFFALDFI), 369 to 389 (LVGNWGVAIILLTVLIKAVFF), 439 to 459 (FGGCLPILLQMPVFISLYWMI), 470 to 490 (FFLWIQDLSVKDPLFILPLLM), and 517 to 537 (PIGFTFLFMFFPAGLVLYWVV).

It belongs to the OXA1/ALB3/YidC family. Type 1 subfamily. In terms of assembly, interacts with the Sec translocase complex via SecD. Specifically interacts with transmembrane segments of nascent integral membrane proteins during membrane integration.

Its subcellular location is the cell inner membrane. In terms of biological role, required for the insertion and/or proper folding and/or complex formation of integral membrane proteins into the membrane. Involved in integration of membrane proteins that insert both dependently and independently of the Sec translocase complex, as well as at least some lipoproteins. Aids folding of multispanning membrane proteins. The polypeptide is Membrane protein insertase YidC (Saccharophagus degradans (strain 2-40 / ATCC 43961 / DSM 17024)).